Consider the following 173-residue polypeptide: Ribosome maturation factor RimP (173 aa).

It belongs to the RimP family.

The protein resides in the cytoplasm. In terms of biological role, required for maturation of 30S ribosomal subunits. This Chlorobaculum tepidum (strain ATCC 49652 / DSM 12025 / NBRC 103806 / TLS) (Chlorobium tepidum) protein is Ribosome maturation factor RimP.